The primary structure comprises 460 residues: NADH-ubiquinone oxidoreductase chain 4 (460 aa).

12 helical membrane passes run 20 to 42 (PKWL…LMWF), 61 to 81 (PLST…ILAS), 93 to 113 (QRLY…AFGA), 114 to 134 (TEII…LIII), 148 to 168 (TYFL…LLLL), 195 to 215 (IWWA…GVHL), 225 to 245 (PVAG…YGMM), 258 to 278 (LAYP…SICL), 285 to 304 (SLIA…GILI), 308 to 330 (WGFS…LFCL), 351 to 371 (IIFP…LALP), and 394 to 414 (ILLT…MFLM).

The protein belongs to the complex I subunit 4 family.

The protein resides in the mitochondrion membrane. The catalysed reaction is a ubiquinone + NADH + 5 H(+)(in) = a ubiquinol + NAD(+) + 4 H(+)(out). Its function is as follows. Core subunit of the mitochondrial membrane respiratory chain NADH dehydrogenase (Complex I) that is believed to belong to the minimal assembly required for catalysis. Complex I functions in the transfer of electrons from NADH to the respiratory chain. The immediate electron acceptor for the enzyme is believed to be ubiquinone. In Carassius auratus (Goldfish), this protein is NADH-ubiquinone oxidoreductase chain 4 (MT-ND4).